The following is a 29-amino-acid chain: Galanin (29 aa).

At A29 the chain carries Alanine amide.

The protein belongs to the galanin family.

It is found in the secreted. Contracts smooth muscle of the gastrointestinal and genitourinary tract, regulates growth hormone release, modulates insulin release, and may be involved in the control of adrenal secretion. The sequence is that of Galanin (gal) from Oncorhynchus mykiss (Rainbow trout).